Reading from the N-terminus, the 184-residue chain is FMRFamide-like neuropeptides 3 (184 aa).

The signal sequence occupies residues 1–23; that stretch reads MISPNHLILLFCVNCAFLVASDA. The propeptide occupies 24-25; that stretch reads TP. Phe35 bears the Phenylalanine amide mark. A propeptide spanning residues 39–73 is cleaved from the precursor; that stretch reads AIADEMTFEEDGYYPSNVMWKRSTVDSSEPVIRDQ. 4 positions are modified to phenylalanine amide: Phe82, Phe95, Phe111, and Phe126. Residues 90-110 are disordered; that stretch reads FGTMRFGKRNPENDTPFGTMR. Residues 130 to 142 constitute a propeptide that is removed on maturation; that stretch reads EDGNAPFGTMKFG. The interval 150-184 is disordered; sequence LGTMRFGKRSADDSAPFGTMRFGKRNPLGTMRFGK. Phenylalanine amide is present on residues Phe155, Phe171, and Phe182.

The protein belongs to the FARP (FMRFamide related peptide) family. In terms of tissue distribution, each flp gene is expressed in a distinct set of neurons. Flp-3 is expressed in the IL1 and PQR neurons.

The protein localises to the secreted. Functionally, FMRFamides and FMRFamide-like peptides are neuropeptides. SAEPFGTMRF-amide inhibits the activity of dissected pharyngeal myogenic muscle system. This is FMRFamide-like neuropeptides 3 from Caenorhabditis elegans.